Consider the following 700-residue polypeptide: DNA topoisomerase 1 (700 aa).

Positions Lys-3 to Ile-114 constitute a Toprim domain. Residues Glu-9 and Asp-83 each contribute to the Mg(2+) site. One can recognise a Topo IA-type catalytic domain in the interval Asn-130–Ile-553. An interaction with DNA region spans residues Ser-164 to Gln-169. The O-(5'-phospho-DNA)-tyrosine intermediate role is filled by Tyr-298. C4-type zinc fingers lie at residues Cys-573–Cys-599, Cys-629–Cys-656, and Cys-669–Cys-692.

The protein belongs to the type IA topoisomerase family. In terms of assembly, monomer. Requires Mg(2+) as cofactor.

The catalysed reaction is ATP-independent breakage of single-stranded DNA, followed by passage and rejoining.. Releases the supercoiling and torsional tension of DNA, which is introduced during the DNA replication and transcription, by transiently cleaving and rejoining one strand of the DNA duplex. Introduces a single-strand break via transesterification at a target site in duplex DNA. The scissile phosphodiester is attacked by the catalytic tyrosine of the enzyme, resulting in the formation of a DNA-(5'-phosphotyrosyl)-enzyme intermediate and the expulsion of a 3'-OH DNA strand. The free DNA strand then undergoes passage around the unbroken strand, thus removing DNA supercoils. Finally, in the religation step, the DNA 3'-OH attacks the covalent intermediate to expel the active-site tyrosine and restore the DNA phosphodiester backbone. This chain is DNA topoisomerase 1, found in Campylobacter jejuni subsp. jejuni serotype O:2 (strain ATCC 700819 / NCTC 11168).